Here is a 261-residue protein sequence, read N- to C-terminus: Cytochrome c oxidase subunit 3 (261 aa).

At 1–15 the chain is on the mitochondrial matrix side; that stretch reads MTHQSHAYHMVKPSP. Residues 16–34 form a helical membrane-spanning segment; the sequence is WPLTGALSALLMTSGLAMW. The Mitochondrial intermembrane portion of the chain corresponds to 35-40; sequence FHFYST. Residues 41–66 traverse the membrane as a helical segment; that stretch reads TLLTLGLLTNTLTMYQWWRDVMREGT. The Mitochondrial matrix segment spans residues 67–72; that stretch reads YQGHHT. The helical transmembrane segment at 73–105 threads the bilayer; the sequence is PPVQKGLRYGMILFITSEVFFFAGFFWAFYHSS. The Mitochondrial intermembrane segment spans residues 106 to 128; the sequence is LAPTPQLGGHWPPTGITPLNPLE. The helical transmembrane segment at 129–152 threads the bilayer; that stretch reads VPLLNTSVLLASGVSITWAHHSLM. Over 153–155 the chain is Mitochondrial matrix; that stretch reads ENN. A helical transmembrane segment spans residues 156-183; the sequence is RNQMIQALLITILLGLYFTLLQASEYFE. The Mitochondrial intermembrane portion of the chain corresponds to 184-190; it reads SPFTISD. The chain crosses the membrane as a helical span at residues 191 to 223; that stretch reads GIYGSTFFVATGFHGLHVIIGSTFLTICLIRQL. At 224 to 232 the chain is on the mitochondrial matrix side; the sequence is MFHFTSKHH. The helical transmembrane segment at 233 to 256 threads the bilayer; sequence FGFQAAAWYWHFVDVVWLFLYVSI. At 257–261 the chain is on the mitochondrial intermembrane side; sequence YWWGS.

The protein belongs to the cytochrome c oxidase subunit 3 family. In terms of assembly, component of the cytochrome c oxidase (complex IV, CIV), a multisubunit enzyme composed of 14 subunits. The complex is composed of a catalytic core of 3 subunits MT-CO1, MT-CO2 and MT-CO3, encoded in the mitochondrial DNA, and 11 supernumerary subunits COX4I, COX5A, COX5B, COX6A, COX6B, COX6C, COX7A, COX7B, COX7C, COX8 and NDUFA4, which are encoded in the nuclear genome. The complex exists as a monomer or a dimer and forms supercomplexes (SCs) in the inner mitochondrial membrane with NADH-ubiquinone oxidoreductase (complex I, CI) and ubiquinol-cytochrome c oxidoreductase (cytochrome b-c1 complex, complex III, CIII), resulting in different assemblies (supercomplex SCI(1)III(2)IV(1) and megacomplex MCI(2)III(2)IV(2)).

Its subcellular location is the mitochondrion inner membrane. It catalyses the reaction 4 Fe(II)-[cytochrome c] + O2 + 8 H(+)(in) = 4 Fe(III)-[cytochrome c] + 2 H2O + 4 H(+)(out). In terms of biological role, component of the cytochrome c oxidase, the last enzyme in the mitochondrial electron transport chain which drives oxidative phosphorylation. The respiratory chain contains 3 multisubunit complexes succinate dehydrogenase (complex II, CII), ubiquinol-cytochrome c oxidoreductase (cytochrome b-c1 complex, complex III, CIII) and cytochrome c oxidase (complex IV, CIV), that cooperate to transfer electrons derived from NADH and succinate to molecular oxygen, creating an electrochemical gradient over the inner membrane that drives transmembrane transport and the ATP synthase. Cytochrome c oxidase is the component of the respiratory chain that catalyzes the reduction of oxygen to water. Electrons originating from reduced cytochrome c in the intermembrane space (IMS) are transferred via the dinuclear copper A center (CU(A)) of subunit 2 and heme A of subunit 1 to the active site in subunit 1, a binuclear center (BNC) formed by heme A3 and copper B (CU(B)). The BNC reduces molecular oxygen to 2 water molecules using 4 electrons from cytochrome c in the IMS and 4 protons from the mitochondrial matrix. The polypeptide is Cytochrome c oxidase subunit 3 (MT-CO3) (Pan troglodytes (Chimpanzee)).